A 188-amino-acid polypeptide reads, in one-letter code: MPKASDIKKGSAIEHNGKVFFVKEISKLTPSGRAGATLFRMRMYDVATGAKSDESFKADDMINLADFSRRSATFSYVDGNEYVFMDSEDYTPYNFNKEAIEEELLFITEETQGLQILIVDGAPVAIELPSAVDLEIVETAPSIKGASASARTKPATMTTGLTVQVPEYIANGEKVKINTTEHKFMSRA.

It belongs to the elongation factor P family.

This chain is Elongation factor P-like protein, found in Aliivibrio fischeri (strain ATCC 700601 / ES114) (Vibrio fischeri).